The chain runs to 226 residues: Cytochrome c-553I (226 aa).

Positions 1–22 (MTSKTTASLLAICVACAASAIA) are cleaved as a signal peptide. The tract at residues 43–68 (AAVSGDAHEQPAAEAPAEEEEETPAV) is disordered. 4 residues coordinate heme: C125, C128, H129, and M173. A disordered region spans residues 203 to 226 (RGRPAKREDKSDEFVAQEDSCMSG).

Binds 1 heme group per subunit.

It localises to the periplasm. The polypeptide is Cytochrome c-553I (cycB) (Paracoccus denitrificans).